Reading from the N-terminus, the 976-residue chain is Ephrin type-A receptor 2 (976 aa).

Residues 1-23 (MELQAARACFALLWGCALAAAAA) form the signal peptide. Residues 1-206 (MELQAARACF…YYKKCPELLQ (206 aa)) form a mediates interaction with CLDN4 region. The Extracellular segment spans residues 24–537 (AQGKEVVLLD…SPEGSGNLAV (514 aa)). The Eph LBD domain occupies 28–206 (EVVLLDFAAA…YYKKCPELLQ (179 aa)). 2 cysteine pairs are disulfide-bonded: Cys70-Cys188 and Cys105-Cys115. The region spanning 328–432 (PPSAPHYLTA…TSRSFRTASV (105 aa)) is the Fibronectin type-III 1 domain. N-linked (GlcNAc...) asparagine glycans are attached at residues Asn407 and Asn435. Positions 438–529 (EPPKVRLEGR…KVHEFQTLSP (92 aa)) constitute a Fibronectin type-III 2 domain. The chain crosses the membrane as a helical span at residues 538-558 (IGGVAVGVVLLLVLAGVGFFI). The Cytoplasmic segment spans residues 559–976 (HRRRKNQRAR…DQVNTVGIPI (418 aa)). Ser570 carries the post-translational modification Phosphoserine. Position 575 is a phosphotyrosine (Tyr575). Residue Ser579 is modified to Phosphoserine. The residue at position 588 (Tyr588) is a Phosphotyrosine; by autocatalysis. Position 594 is a phosphotyrosine (Tyr594). The interval 606 to 906 (TEIHPSCVTR…STSGSEGVPF (301 aa)) is mediates interaction with ARHGEF16 and ELMO2. The region spanning 613 to 875 (VTRQKVIGAG…DIVSILDKLI (263 aa)) is the Protein kinase domain. Position 619 to 627 (619 to 627 (IGAGEFGEV)) interacts with ATP. At Tyr628 the chain carries Phosphotyrosine. Lys646 is an ATP binding site. The residue at position 647 (Thr647) is a Phosphothreonine. At Tyr735 the chain carries Phosphotyrosine; by autocatalysis. Asp739 serves as the catalytic Proton acceptor. Tyr772 carries the phosphotyrosine modification. A phosphoserine mark is found at Ser869 and Ser892. The negatively regulates interaction with ARHGEF16 stretch occupies residues 886–976 (DFDPRVSIRL…DQVNTVGIPI (91 aa)). Residue Ser897 is modified to Phosphoserine; by PKB/AKT1, RPS6KA1, RPS6KA3 AND PKA. A Phosphoserine modification is found at Ser901. Positions 904–968 (VPFRTVSEWL…AYSLLGLKDQ (65 aa)) constitute an SAM domain. Position 921 is a phosphotyrosine; by autocatalysis (Tyr921). Tyr930 is subject to Phosphotyrosine. A PDZ-binding motif is present at residues 974–976 (IPI).

Belongs to the protein kinase superfamily. Tyr protein kinase family. Ephrin receptor subfamily. In terms of assembly, homodimer. Interacts with SLA. Interacts (phosphorylated form) with VAV2, VAV3 and PI3-kinase p85 subunit (PIK3R1, PIK3R2 or PIK3R3); critical for the EFNA1-induced activation of RAC1 which stimulates cell migration. Interacts with INPPL1; regulates activated EPHA2 endocytosis and degradation. Interacts (inactivated form) with PTK2/FAK1 and interacts (EFNA1 ligand-activated form) with PTPN11; regulates integrin-mediated adhesion. Interacts with ARHGEF16, DOCK4 and ELMO2; mediates ligand-independent activation of RAC1 which stimulates cell migration. Interacts with CLDN4; phosphorylates CLDN4 and may regulate tight junctions. Interacts with ACP1. Interacts (via SAM domain) with ANKS1A (via SAM domain). Interacts with CEMIP. Interacts with NCK1; may regulate EPHA2 activity in cell migration and adhesion. Interacts with TIMD4. As to quaternary structure, (Microbial infection) Interacts with human herpes virus 8/HHV-8 glycoprotein L/gL and glycoprotein H/gH heterodimer; this interaction triggers EPHA2 phosphorylation and endocytosis, allowing virus entry. (Microbial infection) Interacts with human cytomegalovirus (HCMV) glycoprotein L/gL and glycoprotein H/gH heterodimer. In terms of assembly, (Microbial infection) Interacts with Epstein-Barr virus/HHV-4 glycoprotein L/gL and glycoprotein H/gH heterodimer; this interaction facilitates virus internalization and fusion. In terms of processing, autophosphorylates. Phosphorylated on tyrosine upon binding and activation by EFNA1. Phosphorylated residues Tyr-588 and Tyr-594 are required for binding VAV2 and VAV3 while phosphorylated residues Tyr-735 and Tyr-930 are required for binding PI3-kinase p85 subunit (PIK3R1, PIK3R2 or PIK3R3). These phosphorylated residues are critical for recruitment of VAV2 and VAV3 and PI3-kinase p85 subunit which transduce downstream signaling to activate RAC1 GTPase and cell migration. Dephosphorylation of Tyr-930 by PTPRF prevents the interaction of EPHA2 with NCK1. Phosphorylated at Ser-897 by PKB; serum-induced phosphorylation which targets EPHA2 to the cell leading edge and stimulates cell migration. Phosphorylation by PKB is inhibited by EFNA1-activated EPHA2 which regulates PKB activity via a reciprocal regulatory loop. Phosphorylated at Ser-897 in response to TNF by RPS6KA1 and RPS6KA3; RPS6KA-EPHA2 signaling pathway controls cell migration. Phosphorylated at Ser-897 by PKA; blocks cell retraction induced by EPHA2 kinase activity. Dephosphorylated by ACP1. Post-translationally, ubiquitinated by CHIP/STUB1. Ubiquitination is regulated by the HSP90 chaperone and regulates the receptor stability and activity through proteasomal degradation. ANKS1A prevents ubiquitination and degradation. Expressed in brain and glioma tissue and glioma cell lines (at protein level). Expressed most highly in tissues that contain a high proportion of epithelial cells, e.g. skin, intestine, lung, and ovary.

It localises to the cell membrane. The protein localises to the cell projection. The protein resides in the ruffle membrane. It is found in the lamellipodium membrane. Its subcellular location is the cell junction. It localises to the focal adhesion. It catalyses the reaction L-tyrosyl-[protein] + ATP = O-phospho-L-tyrosyl-[protein] + ADP + H(+). In terms of biological role, receptor tyrosine kinase which binds promiscuously membrane-bound ephrin-A family ligands residing on adjacent cells, leading to contact-dependent bidirectional signaling into neighboring cells. The signaling pathway downstream of the receptor is referred to as forward signaling while the signaling pathway downstream of the ephrin ligand is referred to as reverse signaling. Activated by the ligand ephrin-A1/EFNA1 regulates migration, integrin-mediated adhesion, proliferation and differentiation of cells. Regulates cell adhesion and differentiation through DSG1/desmoglein-1 and inhibition of the ERK1/ERK2 (MAPK3/MAPK1, respectively) signaling pathway. May also participate in UV radiation-induced apoptosis and have a ligand-independent stimulatory effect on chemotactic cell migration. During development, may function in distinctive aspects of pattern formation and subsequently in development of several fetal tissues. Involved for instance in angiogenesis, in early hindbrain development and epithelial proliferation and branching morphogenesis during mammary gland development. Engaged by the ligand ephrin-A5/EFNA5 may regulate lens fiber cells shape and interactions and be important for lens transparency development and maintenance. With ephrin-A2/EFNA2 may play a role in bone remodeling through regulation of osteoclastogenesis and osteoblastogenesis. Functionally, (Microbial infection) Acts as a receptor for hepatitis C virus (HCV) in hepatocytes and facilitates its cell entry. Mediates HCV entry by promoting the formation of the CD81-CLDN1 receptor complexes that are essential for HCV entry and by enhancing membrane fusion of cells expressing HCV envelope glycoproteins. Acts as a receptor for human cytomegalovirus (HCMV) to mediate viral entry and fusion in glioblastoma cells. The protein is Ephrin type-A receptor 2 (EPHA2) of Homo sapiens (Human).